We begin with the raw amino-acid sequence, 253 residues long: Dihydroanticapsin 7-dehydrogenase (253 aa).

9-31 (LITGGASGIGYAAVQAFLNQQAN) contacts NAD(+). Ser139 provides a ligand contact to substrate. Tyr152 acts as the Proton acceptor in catalysis.

It belongs to the short-chain dehydrogenases/reductases (SDR) family.

The enzyme catalyses L-dihydroanticapsin + NAD(+) = L-anticapsin + NADH + H(+). It participates in antibiotic biosynthesis; bacilysin biosynthesis. Functionally, part of the bacABCDEFG operon responsible for the biosynthesis of bacilysin, an irreversible inactivator of the glutaminase domain of glucosamine synthetase. Catalyzes the dehydrogenation of the C7-hydroxyl group in the 4S-tetrahydrotyrosine (4S-H4Tyr) to yield anticapsin (epoxycyclohexanonyl-Ala). The chain is Dihydroanticapsin 7-dehydrogenase from Bacillus subtilis.